The primary structure comprises 226 residues: Lysoplasmalogenase TMEM86B (226 aa).

At 1–23 (MDARKEGLPLETLFSDQYPQVRR) the chain is on the cytoplasmic side. A helical membrane pass occupies residues 24 to 40 (WLAPFILACSLYFLLWI). The Extracellular portion of the chain corresponds to 41–46 (PVDQPS). The chain crosses the membrane as a helical span at residues 47-68 (WVSALIKCQPILCLVVFLWAVA). Residues 69-74 (PGGSST) lie on the Cytoplasmic side of the membrane. A helical transmembrane segment spans residues 75 to 93 (WLLQGALVCSAVGDACLIW). The Extracellular portion of the chain corresponds to 94-99 (PEAFFY). Residues 100–117 (GTAAFSVAHLFYLGAFGL) traverse the membrane as a helical segment. Over 118–123 (TPLQPG) the chain is Cytoplasmic. The helical transmembrane segment at 124–140 (LLLCTTLASLTYYSFLL) threads the bilayer. The Extracellular portion of the chain corresponds to 141–146 (LHLEQG). A helical membrane pass occupies residues 147–163 (MVLPVMAYGLILNSMLW). Residues 164-171 (RSLVWGGS) are Cytoplasmic-facing. The chain crosses the membrane as a helical span at residues 172–188 (ASWGAVLFTFSDGVLAW). At 189 to 199 (DTFVYSLPFAR) the chain is on the extracellular side. Residues 200–218 (LVTMSTYYAAQLLLILSAL) form a helical membrane-spanning segment. The Cytoplasmic segment spans residues 219–226 (RNPGLKTH).

It belongs to the TMEM86 family. As to quaternary structure, homodimer. Enriched in liver. Also detected in brain and testis.

The protein localises to the endoplasmic reticulum membrane. It localises to the cytoplasm. The catalysed reaction is a 1-O-(1Z-alkenyl)-sn-glycero-3-phosphocholine + H2O = a 2,3-saturated aldehyde + sn-glycerol 3-phosphocholine. The enzyme catalyses a 1-O-(1Z-alkenyl)-sn-glycero-3-phosphoethanolamine + H2O = a 2,3-saturated aldehyde + sn-glycero-3-phosphoethanolamine. With respect to regulation, competitively inhibited by lysophosphatidic acid. Functionally, catalyzes the hydrolysis of the vinyl ether bond of choline or ethanolamine lysoplasmalogens, forming fatty aldehyde and glycerophosphocholine or glycerophosphoethanolamine, respectively and is specific for the sn-2-deacylated (lyso) form of plasmalogen. This is Lysoplasmalogenase TMEM86B (Tmem86b) from Mus musculus (Mouse).